Here is a 425-residue protein sequence, read N- to C-terminus: Actin-related protein 3 (425 aa).

The protein belongs to the actin family. ARP3 subfamily. As to quaternary structure, component of the Arp2/3 complex, at least composed of arx-1, arx-2, arx-4 and arx-6.

The protein localises to the cytoplasm. It localises to the cytoskeleton. Functionally, functions as ATP-binding component of the Arp2/3 complex which is involved in regulation of actin polymerization and together with an activating nucleation-promoting factor (NPF) mediates the formation of branched actin networks. Seems to contact the pointed end of the daughter actin filament. Plays a role in time-dependent memory loss and the retention of conditioned behavior over time. This Caenorhabditis elegans protein is Actin-related protein 3.